The chain runs to 428 residues: Magnesium transporter MRS2-C (428 aa).

Transmembrane regions (helical) follow at residues 364–384 (LLLTTATFVVAIFGVVSGVFG) and 400–420 (WTLVITGVCGLVIFCCFIWYF). The Required for magnesium transport activity signature appears at 384–386 (GMN).

It belongs to the CorA metal ion transporter (MIT) (TC 1.A.35.5) family.

The protein localises to the membrane. In terms of biological role, magnesium transporter that may mediate the influx of magnesium. The chain is Magnesium transporter MRS2-C from Oryza sativa subsp. indica (Rice).